The chain runs to 351 residues: Rhodopsin (351 aa).

Over methionine 1–alanine 36 the chain is Extracellular. Residues asparagine 2 and asparagine 15 are each glycosylated (N-linked (GlcNAc...) asparagine). The helical transmembrane segment at phenylalanine 37 to valine 61 threads the bilayer. At threonine 62 to asparagine 73 the chain is on the cytoplasmic side. The chain crosses the membrane as a helical span at residues tyrosine 74–tyrosine 96. Over serine 97–cysteine 110 the chain is Extracellular. Cysteines 110 and 187 form a disulfide. The chain crosses the membrane as a helical span at residues asparagine 111 to isoleucine 133. A 'Ionic lock' involved in activated form stabilization motif is present at residues glutamate 134–tryptophan 136. Over glutamate 134–histidine 152 the chain is Cytoplasmic. A helical membrane pass occupies residues alanine 153 to valine 173. Topologically, residues glycine 174–serine 202 are extracellular. N-linked (GlcNAc...) asparagine glycosylation is present at asparagine 200. Residues phenylalanine 203–glycine 224 form a helical membrane-spanning segment. The Cytoplasmic segment spans residues arginine 225–arginine 252. The helical transmembrane segment at methionine 253 to phenylalanine 274 threads the bilayer. Residues isoleucine 275 to leucine 286 are Extracellular-facing. A helical membrane pass occupies residues phenylalanine 287–cysteine 308. Lysine 296 is subject to N6-(retinylidene)lysine. The Cytoplasmic segment spans residues methionine 309 to alanine 351. Cysteine 323 carries S-palmitoyl cysteine lipidation. Residues glycine 330–alanine 351 are disordered. The segment covering alanine 335 to alanine 351 has biased composition (low complexity).

The protein belongs to the G-protein coupled receptor 1 family. Opsin subfamily. Post-translationally, phosphorylated on some or all of the serine and threonine residues present in the C-terminal region. Contains one covalently linked retinal chromophore.

It is found in the membrane. Its subcellular location is the cell projection. The protein resides in the cilium. It localises to the photoreceptor outer segment. In terms of biological role, photoreceptor required for image-forming vision at low light intensity. While most salt water fish species use retinal as chromophore, most freshwater fish use 3-dehydroretinal, or a mixture of retinal and 3-dehydroretinal. Light-induced isomerization of 11-cis to all-trans retinal triggers a conformational change that activates signaling via G-proteins. Subsequent receptor phosphorylation mediates displacement of the bound G-protein alpha subunit by arrestin and terminates signaling. The polypeptide is Rhodopsin (rho) (Neoniphon sammara (Spotfin squirrelfish)).